The primary structure comprises 130 residues: Small ribosomal subunit protein uS9 (130 aa).

Residues 98 to 130 (LKRAGLLTRDPRMKERKKPGLKKARRSPQFSKR) form a disordered region. Over residues 111–130 (KERKKPGLKKARRSPQFSKR) the composition is skewed to basic residues.

It belongs to the universal ribosomal protein uS9 family.

This chain is Small ribosomal subunit protein uS9, found in Staphylococcus saprophyticus subsp. saprophyticus (strain ATCC 15305 / DSM 20229 / NCIMB 8711 / NCTC 7292 / S-41).